The following is a 295-amino-acid chain: Protoheme IX farnesyltransferase (295 aa).

The next 9 membrane-spanning stretches (helical) occupy residues 8–28, 35–55, 84–104, 107–127, 132–152, 162–182, 208–228, 233–253, and 264–284; these read VTKPGIIFGNLISVIGGFLLA, YTLFASTLVGVSLVVASGCVF, VSLVYATLLGIAGFMLLWFGA, LACWLGVMGFVVYVGVYSLYM, VYGTLIGSLSGAAPPVIGYCA, LILLAIFSLWQMPHSYAIAIF, ITLYIIAFAVATLMLSLGGYA, LVVAAAVSVWWLGMALRGYKV, and FVFSIVAITSLSVMMSVDFMV.

Belongs to the UbiA prenyltransferase family. Protoheme IX farnesyltransferase subfamily.

It is found in the cell inner membrane. The catalysed reaction is heme b + (2E,6E)-farnesyl diphosphate + H2O = Fe(II)-heme o + diphosphate. It participates in porphyrin-containing compound metabolism; heme O biosynthesis; heme O from protoheme: step 1/1. Functionally, converts heme B (protoheme IX) to heme O by substitution of the vinyl group on carbon 2 of heme B porphyrin ring with a hydroxyethyl farnesyl side group. The polypeptide is Protoheme IX farnesyltransferase (Enterobacter sp. (strain 638)).